Consider the following 133-residue polypeptide: Ribonuclease P protein component (133 aa).

This sequence belongs to the RnpA family. In terms of assembly, consists of a catalytic RNA component (M1 or rnpB) and a protein subunit.

The enzyme catalyses Endonucleolytic cleavage of RNA, removing 5'-extranucleotides from tRNA precursor.. In terms of biological role, RNaseP catalyzes the removal of the 5'-leader sequence from pre-tRNA to produce the mature 5'-terminus. It can also cleave other RNA substrates such as 4.5S RNA. The protein component plays an auxiliary but essential role in vivo by binding to the 5'-leader sequence and broadening the substrate specificity of the ribozyme. The sequence is that of Ribonuclease P protein component from Pseudomonas putida (strain ATCC 47054 / DSM 6125 / CFBP 8728 / NCIMB 11950 / KT2440).